Here is a 344-residue protein sequence, read N- to C-terminus: Protein pelota homolog (344 aa).

It belongs to the eukaryotic release factor 1 family. Pelota subfamily. Monomer. Requires a divalent metal cation as cofactor.

The protein resides in the cytoplasm. Functionally, may function in recognizing stalled ribosomes, interact with stem-loop structures in stalled mRNA molecules, and effect endonucleolytic cleavage of the mRNA. May play a role in the release non-functional ribosomes and degradation of damaged mRNAs. Has endoribonuclease activity. The chain is Protein pelota homolog from Archaeoglobus fulgidus (strain ATCC 49558 / DSM 4304 / JCM 9628 / NBRC 100126 / VC-16).